A 101-amino-acid chain; its full sequence is Integration host factor subunit alpha (101 aa).

Belongs to the bacterial histone-like protein family. Heterodimer of an alpha and a beta chain.

Its function is as follows. This protein is one of the two subunits of integration host factor, a specific DNA-binding protein that functions in genetic recombination as well as in transcriptional and translational control. In Maricaulis maris (strain MCS10) (Caulobacter maris), this protein is Integration host factor subunit alpha.